A 502-amino-acid chain; its full sequence is MVNIRPDEISSIIRQQIDKYDQGVQVANVGTVLQIGDGIARVYGLDQVMAGELLEFEDETIGIALNLESDNVGVVLMGEGRAILEGSSVKATGKIAQVPVGDGYLGRVVNSLGAPIDGKGDISSSDTRLIESAAPGIISRKSVCEPIQTGITAIDSMIPIGRGQRELIIGDRQTGKTSVAIDTIINQKTEDVVCVYVAIGQKAASVASIVTQLEEKGALDYTVIVAANADEPATLQYIAPYTGAAIAEYFMYKGKATLIIYDDLSKQASAYRQMSLLLRRPPGREAFPGDVFYLHSRLLERAAKLSDALGGGSMTALPIIETQAGDVSAYIPTNVISITDGQIFLSGDLFNAGIRPAINVGISVSRVGSAAQIKAMKQVAGKLKLELAQFAELEAFSQFASDLDQATRNQLARGQRLREILKQPASSPISVEEQVAIIYTGINGFLDEVPVNKVKEFVSQLRTNLKNSKPKFAESIRETKALGSDAEELLKSAIADVKQSMG.

170–177 (GDRQTGKT) contacts ATP.

This sequence belongs to the ATPase alpha/beta chains family. F-type ATPases have 2 components, CF(1) - the catalytic core - and CF(0) - the membrane proton channel. CF(1) has five subunits: alpha(3), beta(3), gamma(1), delta(1), epsilon(1). CF(0) has four main subunits: a, b, b' and c.

Its subcellular location is the plastid. The protein localises to the chloroplast thylakoid membrane. The enzyme catalyses ATP + H2O + 4 H(+)(in) = ADP + phosphate + 5 H(+)(out). Functionally, produces ATP from ADP in the presence of a proton gradient across the membrane. The alpha chain is a regulatory subunit. The protein is ATP synthase subunit alpha, chloroplastic of Rhodomonas salina (Cryptomonas salina).